A 361-amino-acid polypeptide reads, in one-letter code: Peptide chain release factor 1 (361 aa).

N5-methylglutamine is present on Gln-237. Over residues 283-296 (VEDEKRRSEEESTR) the composition is skewed to basic and acidic residues. The tract at residues 283–305 (VEDEKRRSEEESTRRNLVSSGDR) is disordered.

It belongs to the prokaryotic/mitochondrial release factor family. Methylated by PrmC. Methylation increases the termination efficiency of RF1.

It is found in the cytoplasm. In terms of biological role, peptide chain release factor 1 directs the termination of translation in response to the peptide chain termination codons UAG and UAA. This chain is Peptide chain release factor 1, found in Shewanella woodyi (strain ATCC 51908 / MS32).